Consider the following 304-residue polypeptide: Protein pxr1 (304 aa).

Positions 1-11 are enriched in basic residues; it reads MGLAAPRKKTK. 3 disordered regions span residues 1–25, 144–238, and 256–276; these read MGLA…SRST, NATA…DTET, and TSLL…MGRR. A compositionally biased stretch (polar residues) spans 15–25; it reads DPNNTSWSRST. Positions 25 to 79 constitute a G-patch domain; that stretch reads TDGFGHRILKAQGWTPGDFLGARNATHSDLFTTASASHIRVVLKDDTLGLGARPK. 2 stretches are compositionally biased toward basic and acidic residues: residues 154 to 170 and 204 to 238; these read LRVD…HENG and GKEM…DTET. Over residues 256-266 the composition is skewed to polar residues; that stretch reads TSLLASNGPST.

This sequence belongs to the PINX1 family.

The protein localises to the nucleus. Its subcellular location is the nucleolus. Its function is as follows. Involved in rRNA-processing at A0, A1 and A2 sites and negatively regulates telomerase. This chain is Protein pxr1 (pxr1), found in Aspergillus fumigatus (strain ATCC MYA-4609 / CBS 101355 / FGSC A1100 / Af293) (Neosartorya fumigata).